The following is a 280-amino-acid chain: Tumor necrosis factor ligand superfamily member 6 (280 aa).

At 1–80 the chain is on the cytoplasmic side; that stretch reads MQQPFNYPYP…KKRGNHSTGL (80 aa). The interval 20 to 70 is disordered; that stretch reads SSPWAPPGTVLPCPTSVPRRPGQRRPPPPPPPPPLPPPPPSPLPPLPLPPL. Residues 43 to 69 are compositionally biased toward pro residues; sequence RRPPPPPPPPPLPPPPPSPLPPLPLPP. The chain crosses the membrane as a helical; Signal-anchor for type II membrane protein span at residues 81 to 101; that stretch reads CLLVMFFMVLVALVGLGLGMF. The Extracellular segment spans residues 102–280; that stretch reads QLFHLQKELA…SQTFFGLYKL (179 aa). The disordered stretch occupies residues 117–155; that stretch reads TSQKHTASSLEKQIGHPSPPPEKKEQRKVAHLTGKPNSR. In terms of domain architecture, THD spans 144–280; sequence KVAHLTGKPN…SQTFFGLYKL (137 aa). N-linked (GlcNAc...) asparagine glycosylation is present at Asn-183. Cys-201 and Cys-232 are oxidised to a cystine. Asn-249 and Asn-259 each carry an N-linked (GlcNAc...) asparagine glycan.

It belongs to the tumor necrosis factor family. In terms of assembly, homotrimer. Interacts with ARHGAP9, BAIAP2L1, BTK, CACNB3, CACNB4, CRK, DLG2, DNMBP, DOCK4, EPS8L3, FGR, FYB1, FYN, HCK, ITK, ITSN2, KALRN, LYN, MACC1, MIA, MPP4, MYO15A, NCF1, NCK1, NCK2, NCKIPSD, OSTF1, PIK3R1, PSTPIP1, RIMBP3C, SAMSN1, SH3GL3, SH3PXD2B, SH3PXD2A, SH3RF2, SKAP2, SNX33, SNX9, SORBS3, SPTA1, SRC, SRGAP1, SRGAP2, SRGAP3, TEC, TJP3 and YES1. Post-translationally, the soluble form derives from the membrane form by proteolytic processing. The membrane-bound form undergoes two successive intramembrane proteolytic cleavages. The first one is processed by ADAM10 producing an N-terminal fragment, which lacks the receptor-binding extracellular domain. This ADAM10-processed FasL (FasL APL) remnant form is still membrane anchored and further processed by SPPL2A that liberates the FasL intracellular domain (FasL ICD). FasL shedding by ADAM10 is a prerequisite for subsequent intramembrane cleavage by SPPL2A in T-cells. In terms of processing, phosphorylated by FGR on tyrosine residues; this is required for ubiquitination and subsequent internalization. N-glycosylated. Glycosylation enhances apoptotic activity. Post-translationally, monoubiquitinated.

It is found in the cell membrane. The protein resides in the cytoplasmic vesicle lumen. Its subcellular location is the lysosome lumen. The protein localises to the secreted. It localises to the nucleus. In terms of biological role, cytokine that binds to TNFRSF6/FAS, a receptor that transduces the apoptotic signal into cells. Involved in cytotoxic T-cell-mediated apoptosis, natural killer cell-mediated apoptosis and in T-cell development. Initiates fratricidal/suicidal activation-induced cell death (AICD) in antigen-activated T-cells contributing to the termination of immune responses. TNFRSF6/FAS-mediated apoptosis has also a role in the induction of peripheral tolerance. Binds to TNFRSF6B/DcR3, a decoy receptor that blocks apoptosis. Its function is as follows. Induces FAS-mediated activation of NF-kappa-B, initiating non-apoptotic signaling pathways. Can induce apoptosis but does not appear to be essential for this process. Cytoplasmic form induces gene transcription inhibition. In Macaca fascicularis (Crab-eating macaque), this protein is Tumor necrosis factor ligand superfamily member 6 (FASLG).